We begin with the raw amino-acid sequence, 95 residues long: Osteocalcin-2 (95 aa).

An N-terminal signal peptide occupies residues 1 to 23 (MRTLSLLTLLALAALCLSDLTDA). The propeptide occupies 24–49 (KPSGPESDKAFMSKQEGNKVVNRLRR). In terms of domain architecture, Gla spans 46–92 (RLRRYLGASVPSPDPLEPTREQCELNPACDELSDQYGLKTAYKRIYG). Ca(2+)-binding residues include E62, E66, E69, and D75. Residues C68 and C74 are joined by a disulfide bond.

The protein belongs to the osteocalcin/matrix Gla protein family. In terms of processing, gamma-carboxyglutamate residues are formed by vitamin K dependent carboxylation by GGCX. These residues are essential for the binding of calcium. Carboxylated in a Ptprv/Esp-dependent process. Decarboxylation promotes the hormone activity. As to expression, bone.

It localises to the secreted. The carboxylated form is one of the main organic components of the bone matrix, which constitutes 1-2% of the total bone protein: it acts as a negative regulator of bone formation and is required to limit bone formation without impairing bone resorption or mineralization. The carboxylated form binds strongly to apatite and calcium. Functionally, the uncarboxylated form acts as a hormone secreted by osteoblasts, which regulates different cellular processes, such as energy metabolism, male fertility and brain development. Regulates of energy metabolism by acting as a hormone favoring pancreatic beta-cell proliferation, insulin secretion and sensitivity and energy expenditure. Uncarboxylated osteocalcin hormone also promotes testosterone production in the testes: acts as a ligand for G protein-coupled receptor GPRC6A at the surface of Leydig cells, initiating a signaling response that promotes the expression of enzymes required for testosterone synthesis in a CREB-dependent manner. Also acts as a regulator of brain development: osteocalcin hormone crosses the blood-brain barrier and acts as a ligand for GPR158 on neurons, initiating a signaling response that prevents neuronal apoptosis in the hippocampus, favors the synthesis of all monoamine neurotransmitters and inhibits that of gamma-aminobutyric acid (GABA). Osteocalcin also crosses the placenta during pregnancy and maternal osteocalcin is required for fetal brain development. This Mus musculus (Mouse) protein is Osteocalcin-2 (Bglap2).